A 176-amino-acid chain; its full sequence is MAAASPVCGSQASAVGASSPPAPAPAPAAGLGRCRMALLLAVALDVAGMAALLTGVFAQLQVRGRDFGDLLIYSGALLVFLSLLGWILWYTGNIEISRQELERDYGLRPSAIARLARKLSRRWSAPATASPRTTAGLRSARRANRAPQPSSSGSRRVRLQLATLEAGSVAAGTGSE.

The interval 1–21 (MAAASPVCGSQASAVGASSPP) is disordered. Topologically, residues 1 to 36 (MAAASPVCGSQASAVGASSPPAPAPAPAAGLGRCRM) are cytoplasmic. A compositionally biased stretch (low complexity) spans 9 to 19 (GSQASAVGASS). The helical transmembrane segment at 37–57 (ALLLAVALDVAGMAALLTGVF) threads the bilayer. Residues 58 to 69 (AQLQVRGRDFGD) lie on the Extracellular side of the membrane. The helical transmembrane segment at 70-90 (LLIYSGALLVFLSLLGWILWY) threads the bilayer. Topologically, residues 91–176 (TGNIEISRQE…GSVAAGTGSE (86 aa)) are cytoplasmic. Residues 124 to 135 (SAPATASPRTTA) show a composition bias toward low complexity. Residues 124 to 156 (SAPATASPRTTAGLRSARRANRAPQPSSSGSRR) are disordered. A Phosphoserine modification is found at serine 175.

It localises to the membrane. In Mus musculus (Mouse), this protein is Transmembrane protein 238 (Tmem238).